The following is a 639-amino-acid chain: Protein zwilch homolog (639 aa).

Basic and acidic residues predominate over residues 76–95 (QKTSSLLNRRENKKTIKSEK). Positions 76-116 (QKTSSLLNRRENKKTIKSEKEDESMDMETAEGDKENTVSET) are disordered. Residues 96 to 105 (EDESMDMETA) show a composition bias toward acidic residues.

It belongs to the ZWILCH family. Component of the RZZ complex composed of rod-1, czw-1 and zwl-1. Interacts with the spindly-like protein spdl-1. Interacts with NDC80 complex component ndc-80.

The protein resides in the cytoplasm. Its subcellular location is the cell cortex. It is found in the chromosome. The protein localises to the centromere. It localises to the kinetochore. The protein resides in the cytoskeleton. Its subcellular location is the spindle. Essential component of the mitotic checkpoint, which prevents cells from prematurely exiting mitosis. Required for chromosome segregation, the assembly of the dynein-dynactin and mdf-1-mdf-2 complexes onto kinetochores and spindle pole separation. Its function related to the spindle assembly machinery and kinetochore-microtubule attachments likely depends on its association in the mitotic RZZ complex. The RZZ complex recruits the spindly-like protein spdl-1 to kinetochores. To prevent irregular chromosome segregation, the complex also inhibits the attachment of the kinetochore-associated NDC80 complex to microtubules. The recruitment of spdl-1 to kinetochores relieves this inhibition. Required for embryonic development. This Caenorhabditis briggsae protein is Protein zwilch homolog (zwl-1).